Reading from the N-terminus, the 73-residue chain is Homeodomain-only protein (73 aa).

A DNA-binding region (homeobox; degenerate) is located at residues 3 to 62; it reads AQTASGPTEDQVEILEYNFNKVNKHPDPTTLCLIAAEAGLTEEQTQKWFKQRLAEWRRSE.

In terms of assembly, interacts with serum response factor (SRF). Component of a large complex containing histone deacetylases such as HDAC2. Interacts with the acetylated forms of HSPA1A and HSPA1B. Interacts with HSPA8. In terms of tissue distribution, expressed in the embryonic and adult heart and in the adult brain, liver, lung, skeletal muscle, intestine and spleen. Throughout embryonic and postnatal development, it is expressed in the myocardium.

Its subcellular location is the nucleus. It localises to the cytoplasm. Atypical homeodomain protein which does not bind DNA and is required to modulate cardiac growth and development. Acts via its interaction with SRF, thereby modulating the expression of SRF-dependent cardiac-specific genes and cardiac development. Prevents SRF-dependent transcription either by inhibiting SRF binding to DNA or by recruiting histone deacetylase (HDAC) proteins that prevent transcription by SRF. Overexpression causes cardiac hypertrophy. Acts as a co-chaperone for HSPA1A and HSPA1B chaperone proteins and assists in chaperone-mediated protein refolding. This is Homeodomain-only protein (Hopx) from Mus musculus (Mouse).